The sequence spans 295 residues: Glycine--tRNA ligase alpha subunit (295 aa).

This sequence belongs to the class-II aminoacyl-tRNA synthetase family. As to quaternary structure, tetramer of two alpha and two beta subunits.

Its subcellular location is the cytoplasm. It carries out the reaction tRNA(Gly) + glycine + ATP = glycyl-tRNA(Gly) + AMP + diphosphate. This Shouchella clausii (strain KSM-K16) (Alkalihalobacillus clausii) protein is Glycine--tRNA ligase alpha subunit.